The sequence spans 593 residues: Cryptochrome-2 (593 aa).

The region spanning 22–151 is the Photolyase/cryptochrome alpha/beta domain; the sequence is ASSVHWFRKG…EVVTENSHTL (130 aa). Lysine 30 participates in a covalent cross-link: Glycyl lysine isopeptide (Lys-Gly) (interchain with G-Cter in ubiquitin). Serine 90 carries the post-translational modification Phosphoserine. Glycyl lysine isopeptide (Lys-Gly) (interchain with G-Cter in ubiquitin) cross-links involve residues lysine 126 and lysine 242. Position 266 is a phosphoserine; by MAPK (serine 266). FAD is bound at residue serine 271. Serine 299 is modified (phosphoserine). Glutamine 308 is an FAD binding site. Lysine 348 is covalently cross-linked (Glycyl lysine isopeptide (Lys-Gly) (interchain with G-Cter in ubiquitin)). FAD-binding positions include histidine 374 and 406–408; that span reads DAD. Residues 390-489 form a required for inhibition of CLOCK-BMAL1-mediated transcription region; the sequence is WVSWESGVRV…IIGVDYPRPI (100 aa). Glycyl lysine isopeptide (Lys-Gly) (interchain with G-Cter in ubiquitin) cross-links involve residues lysine 475 and lysine 504. A disordered region spans residues 532 to 593; sequence PVAEPSSSQA…PTPELPSKDA (62 aa). Residues 537–548 are compositionally biased toward low complexity; that stretch reads SSSQAGSMSSAG. Phosphoserine; by GSK3-beta is present on serine 554. At serine 558 the chain carries Phosphoserine; by DYRK1A and MAPK.

The protein belongs to the DNA photolyase class-1 family. In terms of assembly, component of the circadian core oscillator, which includes the CRY proteins, CLOCK or NPAS2, BMAL1 or BMAL2, CSNK1D and/or CSNK1E, TIMELESS, and the PER proteins. Interacts with TIMELESS. Interacts directly with PER1, PER2 and PER3; interaction with PER2 inhibits its ubiquitination and vice versa. Interacts with CLOCK-BMAL1. Interacts with CLOCK. Interacts with BMAL1. Interacts with NFIL3. Interacts with FBXL3. Interacts with FBXL21. FBXL3, PER2 and the cofactor FAD compete for overlapping binding sites. FBXL3 cannot bind CRY2 that interacts already with PER2 or that contains bound FAD. Interacts with PPP5C (via TPR repeats); the interaction down-regulates the PPP5C phosphatase activity on CSNK1E. Interacts with nuclear receptors AR and NR3C1/GR; the interaction is ligand dependent. Interacts with PRKDC and CIART. Interacts with ISCA1 (in vitro). Interacts with DDB1, USP7 and TARDBP. Interacts with HNF4A. Interacts with PPARA. Interacts with PPARD (via domain NR LBD) and NR1I2 (via domain NR LBD) in a ligand-dependent manner. Interacts with PPARG, NR1I3 and VDR in a ligand-dependent manner. Requires FAD as cofactor. (6R)-5,10-methylene-5,6,7,8-tetrahydrofolate is required as a cofactor. Post-translationally, phosphorylation on Ser-266 by MAPK is important for the inhibition of CLOCK-BMAL1-mediated transcriptional activity. Phosphorylation by CSKNE requires interaction with PER1 or PER2. Phosphorylated in a circadian manner at Ser-554 and Ser-558 in the suprachiasmatic nucleus (SCN) and liver. Phosphorylation at Ser-558 by DYRK1A promotes subsequent phosphorylation at Ser-554 by GSK3-beta: the two-step phosphorylation at the neighboring Ser residues leads to its proteasomal degradation. Ubiquitinated by the SCF(FBXL3) and SCF(FBXL21) complexes, regulating the balance between degradation and stabilization. The SCF(FBXL3) complex is mainly nuclear and mediates ubiquitination and subsequent degradation of CRY2. In contrast, cytoplasmic SCF(FBXL21) complex-mediated ubiquitination leads to stabilize CRY2 and counteract the activity of the SCF(FBXL3) complex. The SCF(FBXL3) and SCF(FBXL21) complexes probably mediate ubiquitination at different Lys residues. The SCF(FBXL3) complex recognizes and binds CRY2 phosphorylated at Ser-554 and Ser-558. Ubiquitination may be inhibited by PER2. Deubiquitinated by USP7. In terms of tissue distribution, expressed in all tissues examined including fetal brain, fibroblasts, heart, brain, placenta, lung, liver, skeletal muscle, kidney, pancreas, spleen, thymus, prostate, testis, ovary, small intestine, colon and leukocytes. Highest levels in heart and skeletal muscle.

It is found in the cytoplasm. Its subcellular location is the nucleus. Its activity is regulated as follows. KL001 (N-[3-(9H-carbazol-9-yl)-2-hydroxypropyl]-N-(2-furanylmethyl)-methanesulfonamide) binds to CRY1 and stabilizes it by inhibiting FBXL3- and ubiquitin-dependent degradation of CRY1 resulting in lengthening of the circadian periods. Its function is as follows. Transcriptional repressor which forms a core component of the circadian clock. The circadian clock, an internal time-keeping system, regulates various physiological processes through the generation of approximately 24 hour circadian rhythms in gene expression, which are translated into rhythms in metabolism and behavior. It is derived from the Latin roots 'circa' (about) and 'diem' (day) and acts as an important regulator of a wide array of physiological functions including metabolism, sleep, body temperature, blood pressure, endocrine, immune, cardiovascular, and renal function. Consists of two major components: the central clock, residing in the suprachiasmatic nucleus (SCN) of the brain, and the peripheral clocks that are present in nearly every tissue and organ system. Both the central and peripheral clocks can be reset by environmental cues, also known as Zeitgebers (German for 'timegivers'). The predominant Zeitgeber for the central clock is light, which is sensed by retina and signals directly to the SCN. The central clock entrains the peripheral clocks through neuronal and hormonal signals, body temperature and feeding-related cues, aligning all clocks with the external light/dark cycle. Circadian rhythms allow an organism to achieve temporal homeostasis with its environment at the molecular level by regulating gene expression to create a peak of protein expression once every 24 hours to control when a particular physiological process is most active with respect to the solar day. Transcription and translation of core clock components (CLOCK, NPAS2, BMAL1, BMAL2, PER1, PER2, PER3, CRY1 and CRY2) plays a critical role in rhythm generation, whereas delays imposed by post-translational modifications (PTMs) are important for determining the period (tau) of the rhythms (tau refers to the period of a rhythm and is the length, in time, of one complete cycle). A diurnal rhythm is synchronized with the day/night cycle, while the ultradian and infradian rhythms have a period shorter and longer than 24 hours, respectively. Disruptions in the circadian rhythms contribute to the pathology of cardiovascular diseases, cancer, metabolic syndromes and aging. A transcription/translation feedback loop (TTFL) forms the core of the molecular circadian clock mechanism. Transcription factors, CLOCK or NPAS2 and BMAL1 or BMAL2, form the positive limb of the feedback loop, act in the form of a heterodimer and activate the transcription of core clock genes and clock-controlled genes (involved in key metabolic processes), harboring E-box elements (5'-CACGTG-3') within their promoters. The core clock genes: PER1/2/3 and CRY1/2 which are transcriptional repressors form the negative limb of the feedback loop and interact with the CLOCK|NPAS2-BMAL1|BMAL2 heterodimer inhibiting its activity and thereby negatively regulating their own expression. This heterodimer also activates nuclear receptors NR1D1/2 and RORA/B/G, which form a second feedback loop and which activate and repress BMAL1 transcription, respectively. CRY1 and CRY2 have redundant functions but also differential and selective contributions at least in defining the pace of the SCN circadian clock and its circadian transcriptional outputs. Less potent transcriptional repressor in cerebellum and liver than CRY1, though less effective in lengthening the period of the SCN oscillator. Seems to play a critical role in tuning SCN circadian period by opposing the action of CRY1. With CRY1, dispensable for circadian rhythm generation but necessary for the development of intercellular networks for rhythm synchrony. May mediate circadian regulation of cAMP signaling and gluconeogenesis by blocking glucagon-mediated increases in intracellular cAMP concentrations and in CREB1 phosphorylation. Besides its role in the maintenance of the circadian clock, is also involved in the regulation of other processes. Plays a key role in glucose and lipid metabolism modulation, in part, through the transcriptional regulation of genes involved in these pathways, such as LEP or ACSL4. Represses glucocorticoid receptor NR3C1/GR-induced transcriptional activity by binding to glucocorticoid response elements (GREs). Represses the CLOCK-BMAL1 induced transcription of BHLHE40/DEC1. Represses the CLOCK-BMAL1 induced transcription of NAMPT. Represses PPARD and its target genes in the skeletal muscle and limits exercise capacity. Represses the transcriptional activity of NR1I2. This chain is Cryptochrome-2 (CRY2), found in Homo sapiens (Human).